Here is a 1412-residue protein sequence, read N- to C-terminus: DNA-directed RNA polymerase subunit beta' (1412 aa).

Residues Cys-70, Cys-72, Cys-85, and Cys-88 each contribute to the Zn(2+) site. Positions 460, 462, and 464 each coordinate Mg(2+). Zn(2+) contacts are provided by Cys-819, Cys-893, Cys-900, and Cys-903. The tract at residues Glu-1392–Glu-1412 is disordered.

Belongs to the RNA polymerase beta' chain family. The RNAP catalytic core consists of 2 alpha, 1 beta, 1 beta' and 1 omega subunit. When a sigma factor is associated with the core the holoenzyme is formed, which can initiate transcription. Mg(2+) serves as cofactor. Zn(2+) is required as a cofactor.

The catalysed reaction is RNA(n) + a ribonucleoside 5'-triphosphate = RNA(n+1) + diphosphate. Its function is as follows. DNA-dependent RNA polymerase catalyzes the transcription of DNA into RNA using the four ribonucleoside triphosphates as substrates. This Burkholderia mallei (strain NCTC 10247) protein is DNA-directed RNA polymerase subunit beta'.